The primary structure comprises 237 residues: Golgi to ER traffic protein 1 (237 aa).

Topologically, residues 1–4 are lumenal; it reads MDSG. Residues 5–24 traverse the membrane as a helical segment; it reads GWIVYCCIFFILLGKVLEYT. Residues 25–110 are Cytoplasmic-facing; that stretch reads SSYQDKWFTK…SSKKVFGRVK (86 aa). Positions 40–99 form a coiled coil; sequence EARKLNSQYHELLSERLRLQEENHSISAQDNYARWTKNNRKLGELDKKLGTIRDKLQETN. A helical membrane pass occupies residues 111–131; it reads LIGLTIPFWILKIWQRSHVVY. At 132–176 the chain is on the lumenal side; the sequence is HFPKQDLFPKLVTGVWARGWLYLALGPLQYLRNGSLNIQDYAPHG. The chain crosses the membrane as a helical span at residues 177 to 193; that stretch reads VSLGIWIWALQATINTL. Residues 194-237 are Cytoplasmic-facing; the sequence is EFLVKQVILEKPVSPPPQKSKSATKAETKRPEKLEITDDKVELD. The interval 205-237 is disordered; sequence PVSPPPQKSKSATKAETKRPEKLEITDDKVELD. Residues 217 to 237 show a composition bias toward basic and acidic residues; sequence TKAETKRPEKLEITDDKVELD.

This sequence belongs to the WRB/GET1 family. In terms of assembly, component of the Golgi to ER traffic (GET) complex, which is composed of GET1, GET2 and GET3. Within the complex, GET1 and GET2 form a heterotetramer which is stabilized by phosphatidylinositol binding and which binds to the GET3 homodimer.

The protein localises to the endoplasmic reticulum membrane. It localises to the golgi apparatus membrane. Its function is as follows. Required for the post-translational delivery of tail-anchored (TA) proteins to the endoplasmic reticulum. Together with GET2, acts as a membrane receptor for soluble GET3, which recognizes and selectively binds the transmembrane domain of TA proteins in the cytosol. The GET complex cooperates with the HDEL receptor ERD2 to mediate the ATP-dependent retrieval of resident ER proteins that contain a C-terminal H-D-E-L retention signal from the Golgi to the ER. This chain is Golgi to ER traffic protein 1, found in Zygosaccharomyces rouxii (strain ATCC 2623 / CBS 732 / NBRC 1130 / NCYC 568 / NRRL Y-229).